Reading from the N-terminus, the 92-residue chain is Elongation factor 1-beta (92 aa).

This sequence belongs to the EF-1-beta/EF-1-delta family.

Its function is as follows. Promotes the exchange of GDP for GTP in EF-1-alpha/GDP, thus allowing the regeneration of EF-1-alpha/GTP that could then be used to form the ternary complex EF-1-alpha/GTP/AAtRNA. The polypeptide is Elongation factor 1-beta (Hyperthermus butylicus (strain DSM 5456 / JCM 9403 / PLM1-5)).